The sequence spans 1256 residues: Bifunctional autolysin (1256 aa).

The signal sequence occupies residues 1-29 (MAKKFNYKLPSMVALTLVGSAVTAHQVQA). The span at 103–138 (GDTRANQSATTNNTQPVAKSTSTTAPKTNTNVTNAG) shows a compositional bias: polar residues. Disordered stretches follow at residues 103–151 (GDTR…NSEN), 172–219 (KTAA…KYKP), and 419–440 (TQST…PSTG). 2 stretches are compositionally biased toward low complexity: residues 172-196 (KTAA…KVTT) and 421-439 (STTT…KPST). The N-acetylmuramoyl-L-alanine amidase stretch occupies residues 199–775 (ASAQPRSVAA…AVAQPKTAVK (577 aa)). 7 consecutive GW domains span residues 443-517 (TVAA…YNTA), 519-593 (SPVN…DTAK), 612-686 (TVSS…YNNA), 688-762 (SPVN…VPAA), 784-859 (TTQT…VQNL), 861-936 (KEVK…APTA), and 943-1017 (AAKD…KELI). Positions 776–1256 (AYTVTKPQTT…GKYFDIPQYK (481 aa)) are endo-beta-N-acetylglucosaminidase.

It in the N-terminal section; belongs to the N-acetylmuramoyl-L-alanine amidase 2 family. In the C-terminal section; belongs to the glycosyl hydrolase 73 family. As to quaternary structure, oligomer; forms a ring structure at the cell surface which is important for efficient partitioning of daughter cells after cell division. In terms of processing, undergoes proteolytic processing to generate the two extracellular lytic enzymes, probably at the septal region on the cell surface.

It is found in the secreted. The enzyme catalyses Hydrolyzes the link between N-acetylmuramoyl residues and L-amino acid residues in certain cell-wall glycopeptides.. It carries out the reaction an N(4)-(oligosaccharide-(1-&gt;3)-[oligosaccharide-(1-&gt;6)]-beta-D-Man-(1-&gt;4)-beta-D-GlcNAc-(1-&gt;4)-alpha-D-GlcNAc)-L-asparaginyl-[protein] + H2O = an oligosaccharide-(1-&gt;3)-[oligosaccharide-(1-&gt;6)]-beta-D-Man-(1-&gt;4)-D-GlcNAc + N(4)-(N-acetyl-beta-D-glucosaminyl)-L-asparaginyl-[protein]. In terms of biological role, endohydrolysis of the di-N-acetylchitobiosyl unit in high-mannose glycopeptides and glycoproteins containing the -[(Man)5(GlcNAc)2]-Asn structure. One N-acetyl-D-glucosamine residue remains attached to the protein; the rest of the oligosaccharide is released intact. Cleaves the peptidoglycan connecting the daughter cells at the end of the cell division cycle, resulting in the separation of the two newly divided cells. Acts as an autolysin in penicillin-induced lysis. This is Bifunctional autolysin (atl) from Staphylococcus aureus (strain COL).